A 273-amino-acid chain; its full sequence is Diaminopimelate epimerase (273 aa).

Substrate is bound by residues Asn11 and Asn60. The Proton donor role is filled by Cys69. Residues 70–71 (GN), Asn181, and 199–200 (ER) each bind substrate. Cys209 acts as the Proton acceptor in catalysis. 210–211 (GT) serves as a coordination point for substrate.

This sequence belongs to the diaminopimelate epimerase family. Homodimer.

It is found in the cytoplasm. It catalyses the reaction (2S,6S)-2,6-diaminopimelate = meso-2,6-diaminopimelate. It functions in the pathway amino-acid biosynthesis; L-lysine biosynthesis via DAP pathway; DL-2,6-diaminopimelate from LL-2,6-diaminopimelate: step 1/1. In terms of biological role, catalyzes the stereoinversion of LL-2,6-diaminopimelate (L,L-DAP) to meso-diaminopimelate (meso-DAP), a precursor of L-lysine and an essential component of the bacterial peptidoglycan. This is Diaminopimelate epimerase from Helicobacter pylori (strain HPAG1).